Reading from the N-terminus, the 427-residue chain is Transcription factor MYB98 (427 aa).

The Nuclear localization signal 1 motif lies at 195-202 (TRKLSSSS). 2 consecutive HTH myb-type domains span residues 212 to 267 (KSTL…RPDI) and 268 to 318 (KKET…RRQF). 2 DNA-binding regions (H-T-H motif) span residues 240-263 (WSHI…HNHL) and 291-314 (WAEI…NATK). The Nuclear localization signal 2 signature appears at 361-368 (NKKKDVVV).

As to expression, expressed at high levels in the synergid cells of the female gametophyte, and at lower levels in the endosperm of young seeds and the trichomes of young leaves and sepals.

The protein resides in the nucleus. Its function is as follows. Transcription factor that binds to the motif 5'-GTAACNT-3' in the promoter of target genes (e.g. DD11 and DD18) and promotes their expression within synergid cells (e.g. in the filiform apparatus) in ovules. Required for the formation of the filiform apparatus during synergid cell differentiation in the female gametophyte. Involved in pollen tube guidance to the micropyle. The protein is Transcription factor MYB98 of Arabidopsis thaliana (Mouse-ear cress).